The sequence spans 149 residues: Large ribosomal subunit protein bL9 (149 aa).

It belongs to the bacterial ribosomal protein bL9 family.

Its function is as follows. Binds to the 23S rRNA. The sequence is that of Large ribosomal subunit protein bL9 from Thiobacillus denitrificans (strain ATCC 25259 / T1).